A 302-amino-acid polypeptide reads, in one-letter code: Protoheme IX farnesyltransferase (302 aa).

The next 9 helical transmembrane spans lie at 24–44 (VVSLVTFTAVTGAVLAYFSGY), 48–68 (FFSVFTAIFCIAVGSGAAGAL), 97–117 (AALVFGLVLFALSVLLMELAV), 120–140 (LSAVLLSVAVFYYSVIYTVYL), 147–167 (NIVVGGGAGAFPPMIGWAAVA), 174–194 (SLVLFLIIFLWTPPHFWALAL), 221–241 (ILCYSVLLFITSILPYLLRFS), 245–265 (YMIVAFILGLVFLYYAINVYL), and 282–302 (FLLFGVFILDAALSTALGMLI).

It belongs to the UbiA prenyltransferase family. Protoheme IX farnesyltransferase subfamily.

Its subcellular location is the cell inner membrane. The catalysed reaction is heme b + (2E,6E)-farnesyl diphosphate + H2O = Fe(II)-heme o + diphosphate. Its pathway is porphyrin-containing compound metabolism; heme O biosynthesis; heme O from protoheme: step 1/1. Converts heme B (protoheme IX) to heme O by substitution of the vinyl group on carbon 2 of heme B porphyrin ring with a hydroxyethyl farnesyl side group. The sequence is that of Protoheme IX farnesyltransferase from Neorickettsia sennetsu (strain ATCC VR-367 / Miyayama) (Ehrlichia sennetsu).